Reading from the N-terminus, the 340-residue chain is Glucokinase (340 aa).

Residue 17–22 (GDIGGT) coordinates ATP.

It belongs to the bacterial glucokinase family.

It is found in the cytoplasm. The enzyme catalyses D-glucose + ATP = D-glucose 6-phosphate + ADP + H(+). The sequence is that of Glucokinase from Agrobacterium fabrum (strain C58 / ATCC 33970) (Agrobacterium tumefaciens (strain C58)).